An 852-amino-acid polypeptide reads, in one-letter code: MRARETRKNYQCLWRWGTMLLGMLMICSAAENLWVTVYYGVPVWKDATTTLFCASDAKAYDTEVHNVWATHACVPTDPNPQEVVLGNVTENFNMWKNNMVDQMHEDIVSLWDQSLKPCVKLTPLCVTLNCTDYLGNATNTNNSSGGTVEKEEIKNCSFNITTGIRDKVQKAYAYFYKLDVVPIDDDNTNTSYRLIHCNSSVITQTCPKVSFEPIPIHYCAPAGFAILKCNNKKFSGKGQCTNVSTVQCTHGIKPVVSTQLLLNGSLAEEEVVIRSDNFTNNAKTILVQLNVSVEINCTRPNNNRRRRITSGPGKVLYTTGEIIGDIRKAYCNISRAKWNKTLEQVATKLREQFGNKTIVFKQSSGGDPEIVMHSFNCRGEFFYCNTTKLFNSTWNENSTWNATGNDTITLPCRIKQIINMWQEVGKAMYAPPIEGQIRCSSNITGLLLTRDGGGDKNSTTEIFRPAGGNMKDNWRSELYKYKVVKIEPLGVAPTKAKRRVVQREKRAVGVIGAMFLGFLGAAGSTMGAASITLTVQARKLLSGIVQQQNNLLRAIEAQQHLLQLTVWGIKQLQARVLAVERYLRDQQLLGIWGCSGKLICTTTVPWNTSWSNKSLDKIWNNMTWMEWEREIDNYTSLIYTLLEESQNQQEKNEQELLELDKWASLWNWFSITNWLWYIRIFIMIVGGLIGLRIIFAVLSIVNRVRQGYSPLSFQTLIPAQRGPDRPEGIEEGGGERDRDRSTRLVNGFLALFWDDLRSLCLFSYHRLTDLLLIVARIVELLGRRGWEVLKYWWNLLLYWSQELKNSAVSLLNATAIAVAEGTDRVIEVVQRVGRAILHIPTRIRQGFERALL.

Positions 1-31 (MRARETRKNYQCLWRWGTMLLGMLMICSAAE) are cleaved as a signal peptide. Topologically, residues 32 to 680 (NLWVTVYYGV…ITNWLWYIRI (649 aa)) are extracellular. A disulfide bridge links Cys53 with Cys73. Asn87, Asn129, Asn136, Asn141, Asn142, Asn155, Asn159, Asn189, and Asn198 each carry an N-linked (GlcNAc...) asparagine; by host glycan. 5 disulfide bridges follow: Cys118/Cys206, Cys125/Cys197, Cys130/Cys156, Cys219/Cys248, and Cys229/Cys240. The V1 stretch occupies residues 130–155 (CTDYLGNATNTNNSSGGTVEKEEIKN). The interval 156–197 (CSFNITTGIRDKVQKAYAYFYKLDVVPIDDDNTNTSYRLIHC) is V2. Asn242, Asn263, Asn277, Asn290, and Asn296 each carry an N-linked (GlcNAc...) asparagine; by host glycan. Residues 297 to 330 (CTRPNNNRRRRITSGPGKVLYTTGEIIGDIRKAY) form a V3 region. Cys297 and Cys331 are disulfide-bonded. N-linked (GlcNAc...) asparagine; by host glycosylation is found at Asn332, Asn339, and Asn355. Positions 363–373 (SSGGDPEIVMH) are CD4-binding loop. 2 cysteine pairs are disulfide-bonded: Cys377–Cys439 and Cys384–Cys412. A V4 region spans residues 384-412 (CNTTKLFNSTWNENSTWNATGNDTITLPC). N-linked (GlcNAc...) asparagine; by host glycans are attached at residues Asn385, Asn391, Asn397, Asn401, Asn405, Asn442, and Asn457. V5 regions lie at residues 455–466 (DKNSTTEIFRPA) and 457–466 (NSTTEIFRPA). Residues 507-528 (AVGVIGAMFLGFLGAAGSTMGA) form a fusion peptide region. Residues 570 to 588 (KQLQARVLAVERYLRDQQL) form an immunosuppression region. The cysteines at positions 594 and 600 are disulfide-linked. Asn607, Asn612, Asn621, and Asn633 each carry an N-linked (GlcNAc...) asparagine; by host glycan. A coiled-coil region spans residues 629-663 (REIDNYTSLIYTLLEESQNQQEKNEQELLELDKWA). The segment at 658–679 (ELDKWASLWNWFSITNWLWYIR) is MPER; binding to GalCer. A helical transmembrane segment spans residues 681-701 (FIMIVGGLIGLRIIFAVLSIV). At 702–852 (NRVRQGYSPL…IRQGFERALL (151 aa)) the chain is on the cytoplasmic side. Positions 708–711 (YSPL) match the YXXL motif; contains endocytosis signal motif. Residues 717–739 (IPAQRGPDRPEGIEEGGGERDRD) form a disordered region. The segment covering 722–739 (GPDRPEGIEEGGGERDRD) has biased composition (basic and acidic residues). Cys760 is lipidated: S-palmitoyl cysteine; by host. The Di-leucine internalization motif signature appears at 851 to 852 (LL).

It belongs to the HIV-1 env protein family. The mature envelope protein (Env) consists of a homotrimer of non-covalently associated gp120-gp41 heterodimers. The resulting complex protrudes from the virus surface as a spike. There seems to be as few as 10 spikes on the average virion. Interacts with host CD4, CCR5 and CXCR4. Gp120 also interacts with the C-type lectins CD209/DC-SIGN and CLEC4M/DC-SIGNR (collectively referred to as DC-SIGN(R)). Gp120 and gp41 interact with GalCer. Gp120 interacts with host ITGA4/ITGB7 complex; on CD4+ T-cells, this interaction results in rapid activation of integrin ITGAL/LFA-1, which facilitates efficient cell-to-cell spreading of HIV-1. Gp120 interacts with cell-associated heparan sulfate; this interaction increases virus infectivity on permissive cells and may be involved in infection of CD4- cells. In terms of assembly, the mature envelope protein (Env) consists of a homotrimer of non-covalently associated gp120-gp41 heterodimers. The resulting complex protrudes from the virus surface as a spike. There seems to be as few as 10 spikes on the average virion. In terms of processing, highly glycosylated by host. The high number of glycan on the protein is reffered to as 'glycan shield' because it contributes to hide protein sequence from adaptive immune system. Palmitoylation of the transmembrane protein and of Env polyprotein (prior to its proteolytic cleavage) is essential for their association with host cell membrane lipid rafts. Palmitoylation is therefore required for envelope trafficking to classical lipid rafts, but not for viral replication. Post-translationally, specific enzymatic cleavages in vivo yield mature proteins. Envelope glycoproteins are synthesized as an inactive precursor that is heavily N-glycosylated and processed likely by host cell furin in the Golgi to yield the mature SU and TM proteins. The cleavage site between SU and TM requires the minimal sequence [KR]-X-[KR]-R. About 2 of the 9 disulfide bonds of gp41 are reduced by P4HB/PDI, following binding to CD4 receptor.

It localises to the virion membrane. Its subcellular location is the host cell membrane. The protein localises to the host endosome membrane. Functionally, oligomerizes in the host endoplasmic reticulum into predominantly trimers. In a second time, gp160 transits in the host Golgi, where glycosylation is completed. The precursor is then proteolytically cleaved in the trans-Golgi and thereby activated by cellular furin or furin-like proteases to produce gp120 and gp41. In terms of biological role, attaches the virus to the host lymphoid cell by binding to the primary receptor CD4. This interaction induces a structural rearrangement creating a high affinity binding site for a chemokine coreceptor like CXCR4 and/or CCR5. Acts as a ligand for CD209/DC-SIGN and CLEC4M/DC-SIGNR, which are respectively found on dendritic cells (DCs), and on endothelial cells of liver sinusoids and lymph node sinuses. These interactions allow capture of viral particles at mucosal surfaces by these cells and subsequent transmission to permissive cells. HIV subverts the migration properties of dendritic cells to gain access to CD4+ T-cells in lymph nodes. Virus transmission to permissive T-cells occurs either in trans (without DCs infection, through viral capture and transmission), or in cis (following DCs productive infection, through the usual CD4-gp120 interaction), thereby inducing a robust infection. In trans infection, bound virions remain infectious over days and it is proposed that they are not degraded, but protected in non-lysosomal acidic organelles within the DCs close to the cell membrane thus contributing to the viral infectious potential during DCs' migration from the periphery to the lymphoid tissues. On arrival at lymphoid tissues, intact virions recycle back to DCs' cell surface allowing virus transmission to CD4+ T-cells. Its function is as follows. Acts as a class I viral fusion protein. Under the current model, the protein has at least 3 conformational states: pre-fusion native state, pre-hairpin intermediate state, and post-fusion hairpin state. During fusion of viral and target intracellular membranes, the coiled coil regions (heptad repeats) assume a trimer-of-hairpins structure, positioning the fusion peptide in close proximity to the C-terminal region of the ectodomain. The formation of this structure appears to drive apposition and subsequent fusion of viral and target cell membranes. Complete fusion occurs in host cell endosomes and is dynamin-dependent, however some lipid transfer might occur at the plasma membrane. The virus undergoes clathrin-dependent internalization long before endosomal fusion, thus minimizing the surface exposure of conserved viral epitopes during fusion and reducing the efficacy of inhibitors targeting these epitopes. Membranes fusion leads to delivery of the nucleocapsid into the cytoplasm. In Human immunodeficiency virus type 1 group M subtype B (isolate SF33) (HIV-1), this protein is Envelope glycoprotein gp160.